The sequence spans 515 residues: MTKRALISVSDKSGIIDFAKELKNLGWDIISTGGTKVALDNAGVETIAIDDVTGFPEMMDGRVKTLHPNIHGGLLARRDVDSHLQAAKDNNIELIDLVVINLYPFKETILRPDVTYDLAVENIDIGGPSMLRSAAKNHASVTVVVDPADYATVLGELADAGQTTFETRQRLAAKVFRHTAAYDALIAEYFTAQVGEAKPEKLTITYDLKQAMRYGENPQQDADFYQKALPTDYSIASAKQLNGKELSFNNIRDADAAIRIIRDFKDRPTVIALKHMNPCGIGQADDIETAWDYAYEADPVSIFGGIVVLNREVDAATAKKMHPIFLEIIIAPSYSEEALAILTNKKKNLRILELPFDAQAASEVEAEYTGVVGGLLVQNQDVVAENPSDWQVVTDRQPTEQEATALEFAWKAIKYVKSNGIIITNDHMTLGLGAGQTNRVGSVKIAIEQAKDHLDGAVLASDAFFPFADNIEEVAAAGVKAIIQPGGSVRDQDSIDAANKHGLTMIFTGVRHFRH.

The region spanning 1-145 (MTKRALISVS…KNHASVTVVV (145 aa)) is the MGS-like domain.

The protein belongs to the PurH family.

It carries out the reaction (6R)-10-formyltetrahydrofolate + 5-amino-1-(5-phospho-beta-D-ribosyl)imidazole-4-carboxamide = 5-formamido-1-(5-phospho-D-ribosyl)imidazole-4-carboxamide + (6S)-5,6,7,8-tetrahydrofolate. The enzyme catalyses IMP + H2O = 5-formamido-1-(5-phospho-D-ribosyl)imidazole-4-carboxamide. It functions in the pathway purine metabolism; IMP biosynthesis via de novo pathway; 5-formamido-1-(5-phospho-D-ribosyl)imidazole-4-carboxamide from 5-amino-1-(5-phospho-D-ribosyl)imidazole-4-carboxamide (10-formyl THF route): step 1/1. The protein operates within purine metabolism; IMP biosynthesis via de novo pathway; IMP from 5-formamido-1-(5-phospho-D-ribosyl)imidazole-4-carboxamide: step 1/1. The polypeptide is Bifunctional purine biosynthesis protein PurH (Streptococcus pyogenes serotype M18 (strain MGAS8232)).